A 601-amino-acid chain; its full sequence is Probable N-acetylgalactosaminyltransferase 7 (601 aa).

Residues 1 to 20 (MIIARKKLQLQRLWRQRGCR) lie on the Cytoplasmic side of the membrane. The chain crosses the membrane as a helical; Signal-anchor for type II membrane protein span at residues 21–38 (VATYICLGVLVLFGFVYN). Topologically, residues 39-601 (SKGNSMSSIK…FVWKEFYQSS (563 aa)) are lumenal. The disordered stretch occupies residues 61–108 (DLTNKELPGGPDPNTIFRGSELGNYEPKEPEIPSNQPGEHGKPVPVTD). N135 is a glycosylation site (N-linked (GlcNAc...) asparagine). 5 disulfides stabilise this stretch: C146/C382, C373/C452, C490/C506, C529/C542, and C568/C583. The interval 155–265 (LPTVSVVVVF…TNWLPPLLAP (111 aa)) is catalytic subdomain A. Residues D196 and R226 each coordinate substrate. The Mn(2+) site is built by D249 and H251. The interval 328–390 (PFRSPTHAGG…PCSHVGHVYR (63 aa)) is catalytic subdomain B. W359 contacts substrate. H387 contributes to the Mn(2+) binding site. Positions 390 and 395 each coordinate substrate. One can recognise a Ricin B-type lectin domain in the interval 477–595 (DVWGEARNPA…DNERQKFVWK (119 aa)).

Belongs to the glycosyltransferase 2 family. GalNAc-T subfamily. Requires Mn(2+) as cofactor.

It is found in the golgi apparatus membrane. It functions in the pathway protein modification; protein glycosylation. Its function is as follows. Probable glycopeptide transferase involved in O-linked oligosaccharide biosynthesis. Glycopeptide transferases catalyze the transfer of an N-acetyl-D-galactosamine residue to an already glycosylated peptide. In contrast to other members of the family, it does not act as a peptide transferase that transfers GalNAc onto serine or threonine residue on peptides that have been tested. Some peptide transferase activity is however not excluded, considering that its appropriate peptide substrate may remain unidentified. This chain is Probable N-acetylgalactosaminyltransferase 7 (gly-7), found in Caenorhabditis elegans.